Reading from the N-terminus, the 207-residue chain is Ribonuclease HII (207 aa).

The 190-residue stretch at 10–199 (RLIAGVDEVG…VRNALLDAEL (190 aa)) folds into the RNase H type-2 domain. Positions 16, 17, and 108 each coordinate a divalent metal cation.

The protein belongs to the RNase HII family. Mn(2+) is required as a cofactor. The cofactor is Mg(2+).

The protein resides in the cytoplasm. The catalysed reaction is Endonucleolytic cleavage to 5'-phosphomonoester.. Its function is as follows. Endonuclease that specifically degrades the RNA of RNA-DNA hybrids. This Erwinia tasmaniensis (strain DSM 17950 / CFBP 7177 / CIP 109463 / NCPPB 4357 / Et1/99) protein is Ribonuclease HII.